Reading from the N-terminus, the 467-residue chain is Plasma alpha-L-fucosidase (467 aa).

The N-terminal stretch at 1-28 (MRPQELPRLAFPLLLLLLLLLPPPPCPA) is a signal peptide. Asparagine 171 and asparagine 239 each carry an N-linked (GlcNAc...) asparagine glycan. Residue serine 301 is modified to Phosphoserine; by FAM20C. Asparagine 377 carries N-linked (GlcNAc...) asparagine glycosylation.

This sequence belongs to the glycosyl hydrolase 29 family. In terms of assembly, homotetramer.

It is found in the secreted. The enzyme catalyses an alpha-L-fucoside + H2O = L-fucose + an alcohol. Alpha-L-fucosidase is responsible for hydrolyzing the alpha-1,6-linked fucose joined to the reducing-end N-acetylglucosamine of the carbohydrate moieties of glycoproteins. In Homo sapiens (Human), this protein is Plasma alpha-L-fucosidase (FUCA2).